The following is a 258-amino-acid chain: UPF0246 protein HS_0482 (258 aa).

This sequence belongs to the UPF0246 family.

The chain is UPF0246 protein HS_0482 from Histophilus somni (strain 129Pt) (Haemophilus somnus).